Here is a 256-residue protein sequence, read N- to C-terminus: Small ribosomal subunit protein uS2 (256 aa).

Belongs to the universal ribosomal protein uS2 family.

This chain is Small ribosomal subunit protein uS2, found in Streptococcus agalactiae serotype III (strain NEM316).